We begin with the raw amino-acid sequence, 159 residues long: Ribonuclease H (159 aa).

Residues 10 to 153 form the RNase H type-1 domain; the sequence is TQTQVVIYTD…ADALANQGVE (144 aa). Aspartate 19, glutamate 57, aspartate 79, and aspartate 145 together coordinate Mg(2+).

This sequence belongs to the RNase H family. As to quaternary structure, monomer. Requires Mg(2+) as cofactor.

The protein resides in the cytoplasm. It catalyses the reaction Endonucleolytic cleavage to 5'-phosphomonoester.. In terms of biological role, endonuclease that specifically degrades the RNA of RNA-DNA hybrids. The chain is Ribonuclease H from Polaromonas sp. (strain JS666 / ATCC BAA-500).